We begin with the raw amino-acid sequence, 84 residues long: Large ribosomal subunit protein bL27 (84 aa).

The interval 1-21 (MAHKKGGGSTKNGRDSNPKYL) is disordered.

Belongs to the bacterial ribosomal protein bL27 family.

The sequence is that of Large ribosomal subunit protein bL27 from Chlorobium luteolum (strain DSM 273 / BCRC 81028 / 2530) (Pelodictyon luteolum).